Here is a 509-residue protein sequence, read N- to C-terminus: Ribonuclease Y (509 aa).

Residues 5–25 (IAGVSGIAGAAVGAGACYLWL) traverse the membrane as a helical segment. The 67-residue stretch at 199–265 (LINLVNLPSD…TRVIEILIED (67 aa)) folds into the KH domain. The HD domain maps to 325–418 (ALAHTLEVAK…VCAADTLSAA (94 aa)).

The protein belongs to the RNase Y family.

The protein resides in the cell membrane. In terms of biological role, endoribonuclease that initiates mRNA decay. The protein is Ribonuclease Y of Sulfurovum sp. (strain NBC37-1).